Reading from the N-terminus, the 238-residue chain is Fibroblast growth factor-binding protein 1 (238 aa).

Positions 1–20 (MRIHGLILLSFLLLAAQVLS) are cleaved as a signal peptide. Positions 25–61 (KTAKNVPDSTTEEDMSPSLGKARNKQRSRTSKSMTHG) are disordered. 3 cysteine pairs are disulfide-bonded: Cys71/Cys88, Cys97/Cys130, and Cys106/Cys142. O-linked (GalNAc...) serine glycosylation occurs at Ser164. The segment at 197–238 (KDSECLEDPDVLTQRKTALEFCGESWSSFCTFFLNMLQATSC) is sufficient for interaction with FGF2 and FGF2-induced effects. 2 disulfides stabilise this stretch: Cys201–Cys238 and Cys218–Cys226.

Belongs to the fibroblast growth factor-binding protein family. In terms of assembly, found in a complex with FGFBP1, FGF1 and FGF2. Interacts with FGF1, FGF2, FGF7, FGF10, FGF22 and HSPG2. In terms of tissue distribution, expressed in gut, eye, thymus, skin, lung, tongue, Purkinje cells and cerebral chorioid plexus (at protein level).

The protein resides in the secreted. The protein localises to the extracellular space. It localises to the cell membrane. In terms of biological role, acts as a carrier protein that release fibroblast-binding factors (FGFs) from the extracellular matrix (EM) storage and thus enhance the mitogenic activity of FGFs. Enhances FGF2 signaling during tissue repair, angiogenesis and in tumor growth. In Rattus norvegicus (Rat), this protein is Fibroblast growth factor-binding protein 1 (Fgfbp1).